The chain runs to 547 residues: Chaperonin GroEL (547 aa).

ATP-binding positions include 30 to 33 (TLGP), lysine 51, 87 to 91 (DGTTT), glycine 415, 479 to 481 (DAA), and aspartate 495.

This sequence belongs to the chaperonin (HSP60) family. As to quaternary structure, forms a cylinder of 14 subunits composed of two heptameric rings stacked back-to-back. Interacts with the co-chaperonin GroES.

The protein localises to the cytoplasm. It catalyses the reaction ATP + H2O + a folded polypeptide = ADP + phosphate + an unfolded polypeptide.. In terms of biological role, together with its co-chaperonin GroES, plays an essential role in assisting protein folding. The GroEL-GroES system forms a nano-cage that allows encapsulation of the non-native substrate proteins and provides a physical environment optimized to promote and accelerate protein folding. The protein is Chaperonin GroEL of Dichelobacter nodosus (strain VCS1703A).